Reading from the N-terminus, the 583-residue chain is Membrane protein insertase YidC (583 aa).

6 helical membrane-spanning segments follow: residues 5 to 25, 341 to 361, 362 to 382, 427 to 447, 473 to 493, and 520 to 540; these read SVTGLAIIAVIMIVWLQFMSP, PFAEFIILPVFSWMNGFVSNY, GLIIIIFAFLIKLVTYPLSMA, IGGCLPVVLQMPLLFAMFYVF, FGFAIPMYGSHIAVFPILMAV, and AMMLLFFNNMPAGLGLYYLMF.

This sequence belongs to the OXA1/ALB3/YidC family. Type 1 subfamily. In terms of assembly, interacts with the Sec translocase complex via SecD. Specifically interacts with transmembrane segments of nascent integral membrane proteins during membrane integration.

It localises to the cell inner membrane. In terms of biological role, required for the insertion and/or proper folding and/or complex formation of integral membrane proteins into the membrane. Involved in integration of membrane proteins that insert both dependently and independently of the Sec translocase complex, as well as at least some lipoproteins. Aids folding of multispanning membrane proteins. This is Membrane protein insertase YidC from Pelodictyon phaeoclathratiforme (strain DSM 5477 / BU-1).